The chain runs to 354 residues: Transcription factor BHLH3 (354 aa).

The interval 124-143 (VAEEETSGDKALLHGGGGSS) is disordered. A basic motif region spans residues 178 to 191 (GTPSKNLMAERRRR). Residues 178 to 227 (GTPSKNLMAERRRRKRLNDRLSMLRSIVPKISKMDRTSILGDTIDYVKEL) form the bHLH domain. The helix-loop-helix motif stretch occupies residues 192–227 (KRLNDRLSMLRSIVPKISKMDRTSILGDTIDYVKEL).

It belongs to the bHLH protein family. As to quaternary structure, interacts with LAX1. Post-translationally, phosphorylated by MAPK3 and MAPK6.

It localises to the nucleus. The protein resides in the cytoplasm. Functionally, transcription factor involved in defense responses that functions downstream of RAC1 and upstream of PAL1 and WRKY19 genes. The chain is Transcription factor BHLH3 from Oryza sativa subsp. japonica (Rice).